Reading from the N-terminus, the 236-residue chain is Methylosome subunit pICln (236 aa).

Position 2 is an N-acetylserine (Ser2). Phosphoserine occurs at positions 95, 143, 192, 194, 197, and 209. A disordered region spans residues Leu134–Gln158. Residues Pro138–Asp152 are compositionally biased toward acidic residues. At Thr222 the chain carries Phosphothreonine.

Belongs to the pICln (TC 1.A.47) family. In terms of assembly, component of the methylosome, a 20S complex containing at least PRMT5/SKB1, WDR77/MEP50 and CLNS1A/pICln. May mediate SNRPD1 and SNRPD3 methylation. Forms a 6S pICln-Sm complex composed of CLNS1A/pICln, SNRPD1, SNRPD2, SNRPE, SNRPF and SNRPG; ring-like structure where CLNS1A/pICln mimics additional Sm proteins and which is unable to assemble into the core snRNP. Interacts with LSM10 and LSM11. As to expression, expressed in most tissues.

Its subcellular location is the cytoplasm. It localises to the cytosol. The protein localises to the nucleus. It is found in the cytoskeleton. Functionally, involved in both the assembly of spliceosomal snRNPs and the methylation of Sm proteins. Chaperone that regulates the assembly of spliceosomal U1, U2, U4 and U5 small nuclear ribonucleoproteins (snRNPs), the building blocks of the spliceosome, and thereby plays an important role in the splicing of cellular pre-mRNAs. Most spliceosomal snRNPs contain a common set of Sm proteins SNRPB, SNRPD1, SNRPD2, SNRPD3, SNRPE, SNRPF and SNRPG that assemble in a heptameric protein ring on the Sm site of the small nuclear RNA to form the core snRNP (Sm core). In the cytosol, the Sm proteins SNRPD1, SNRPD2, SNRPE, SNRPF and SNRPG are trapped in an inactive 6S pICln-Sm complex by the chaperone CLNS1A that controls the assembly of the core snRNP. Dissociation by the SMN complex of CLNS1A from the trapped Sm proteins and their transfer to an SMN-Sm complex triggers the assembly of core snRNPs and their transport to the nucleus. The protein is Methylosome subunit pICln (Clns1a) of Rattus norvegicus (Rat).